A 162-amino-acid chain; its full sequence is Crossover junction endodeoxyribonuclease RuvC (162 aa).

Residues Asp-8, Glu-69, and His-141 contribute to the active site. 3 residues coordinate Mg(2+): Asp-8, Glu-69, and His-141.

The protein belongs to the RuvC family. As to quaternary structure, homodimer which binds Holliday junction (HJ) DNA. The HJ becomes 2-fold symmetrical on binding to RuvC with unstacked arms; it has a different conformation from HJ DNA in complex with RuvA. In the full resolvosome a probable DNA-RuvA(4)-RuvB(12)-RuvC(2) complex forms which resolves the HJ. The cofactor is Mg(2+).

The protein localises to the cytoplasm. It catalyses the reaction Endonucleolytic cleavage at a junction such as a reciprocal single-stranded crossover between two homologous DNA duplexes (Holliday junction).. The RuvA-RuvB-RuvC complex processes Holliday junction (HJ) DNA during genetic recombination and DNA repair. Endonuclease that resolves HJ intermediates. Cleaves cruciform DNA by making single-stranded nicks across the HJ at symmetrical positions within the homologous arms, yielding a 5'-phosphate and a 3'-hydroxyl group; requires a central core of homology in the junction. The consensus cleavage sequence is 5'-(A/T)TT(C/G)-3'. Cleavage occurs on the 3'-side of the TT dinucleotide at the point of strand exchange. HJ branch migration catalyzed by RuvA-RuvB allows RuvC to scan DNA until it finds its consensus sequence, where it cleaves and resolves the cruciform DNA. The sequence is that of Crossover junction endodeoxyribonuclease RuvC from Wolbachia sp. subsp. Drosophila simulans (strain wRi).